Consider the following 210-residue polypeptide: Na(+)-translocating NADH-quinone reductase subunit D (210 aa).

The next 6 helical transmembrane spans lie at 14–34 (PIVNNNPIALQVLGVCSALAV), 42–62 (LVMALALTAVTAFSNLFISMI), 72–92 (IIVQMTIIASLVIVVDQLLQA), 103–123 (VFVGLIITNCIVMGRAEAYAM), 131–151 (FMDGIGNGLGYGAILLAVGFV), and 178–198 (NGLLLLPPSAFFLIGVLIWII).

It belongs to the NqrDE/RnfAE family. In terms of assembly, composed of six subunits; NqrA, NqrB, NqrC, NqrD, NqrE and NqrF.

Its subcellular location is the cell inner membrane. The enzyme catalyses a ubiquinone + n Na(+)(in) + NADH + H(+) = a ubiquinol + n Na(+)(out) + NAD(+). Its function is as follows. NQR complex catalyzes the reduction of ubiquinone-1 to ubiquinol by two successive reactions, coupled with the transport of Na(+) ions from the cytoplasm to the periplasm. NqrA to NqrE are probably involved in the second step, the conversion of ubisemiquinone to ubiquinol. This chain is Na(+)-translocating NADH-quinone reductase subunit D, found in Shewanella baltica (strain OS223).